A 169-amino-acid chain; its full sequence is Ureidoglycolate lyase (169 aa).

It belongs to the ureidoglycolate lyase family. As to quaternary structure, homodimer. Ni(2+) serves as cofactor.

The catalysed reaction is (S)-ureidoglycolate = urea + glyoxylate. Its pathway is nitrogen metabolism; (S)-allantoin degradation. In terms of biological role, catalyzes the catabolism of the allantoin degradation intermediate (S)-ureidoglycolate, generating urea and glyoxylate. Involved in the utilization of allantoin as nitrogen source. The protein is Ureidoglycolate lyase of Pseudomonas paraeruginosa (strain DSM 24068 / PA7) (Pseudomonas aeruginosa (strain PA7)).